Reading from the N-terminus, the 336-residue chain is Alpha-glucoside transport system permease protein AglF (336 aa).

8 consecutive transmembrane segments (helical) span residues 4 to 24 (LIAA…YFWS), 55 to 75 (PWLF…YPVV), 113 to 133 (FLWL…IAAL), 146 to 166 (LIFM…KFIY), 176 to 196 (IGLL…WITL), 202 to 222 (FFLM…ILSA), 258 to 278 (IAVV…IVLA), and 304 to 324 (FGRG…IMIW). The region spanning 109–325 (IFNNFLWLLV…ILVVPIMIWN (217 aa)) is the ABC transmembrane type-1 domain.

This sequence belongs to the binding-protein-dependent transport system permease family. MalFG subfamily.

The protein localises to the cell inner membrane. Its function is as follows. Part of the binding-protein-dependent transport system for alpha-glucosides such as sucrose, maltose and trehalose. Probably responsible for the translocation of the substrate across the membrane. The protein is Alpha-glucoside transport system permease protein AglF (aglF) of Rhizobium meliloti (strain 1021) (Ensifer meliloti).